A 242-amino-acid chain; its full sequence is Small ribosomal subunit protein uS2 (242 aa).

Belongs to the universal ribosomal protein uS2 family.

In Shewanella frigidimarina (strain NCIMB 400), this protein is Small ribosomal subunit protein uS2.